The primary structure comprises 249 residues: Phosphate import ATP-binding protein PstB 2 (249 aa).

Positions 4–244 constitute an ABC transporter domain; it reads FEVTHLNLFY…PKDHRTQGYV (241 aa). 36-43 contributes to the ATP binding site; sequence GPSGCGKS.

This sequence belongs to the ABC transporter superfamily. Phosphate importer (TC 3.A.1.7) family. The complex is composed of two ATP-binding proteins (PstB), two transmembrane proteins (PstC and PstA) and a solute-binding protein (PstS).

Its subcellular location is the cell inner membrane. The catalysed reaction is phosphate(out) + ATP + H2O = ADP + 2 phosphate(in) + H(+). Its function is as follows. Part of the ABC transporter complex PstSACB involved in phosphate import. Responsible for energy coupling to the transport system. This chain is Phosphate import ATP-binding protein PstB 2, found in Shewanella oneidensis (strain ATCC 700550 / JCM 31522 / CIP 106686 / LMG 19005 / NCIMB 14063 / MR-1).